A 753-amino-acid polypeptide reads, in one-letter code: 5-methyltetrahydropteroyltriglutamate--homocysteine methyltransferase (753 aa).

5-methyltetrahydropteroyltri-L-glutamate contacts are provided by residues 17 to 20 and lysine 117; that span reads RELK. L-homocysteine contacts are provided by residues 431-433 and glutamate 484; that span reads IGS. Residues 431–433 and glutamate 484 each bind L-methionine; that span reads IGS. 5-methyltetrahydropteroyltri-L-glutamate is bound by residues 515–516 and tryptophan 561; that span reads RC. Residue aspartate 599 participates in L-homocysteine binding. An L-methionine-binding site is contributed by aspartate 599. Residue glutamate 605 coordinates 5-methyltetrahydropteroyltri-L-glutamate. 3 residues coordinate Zn(2+): histidine 641, cysteine 643, and glutamate 665. The active-site Proton donor is the histidine 694. Cysteine 726 provides a ligand contact to Zn(2+).

The protein belongs to the vitamin-B12 independent methionine synthase family. Requires Zn(2+) as cofactor.

It catalyses the reaction 5-methyltetrahydropteroyltri-L-glutamate + L-homocysteine = tetrahydropteroyltri-L-glutamate + L-methionine. Its pathway is amino-acid biosynthesis; L-methionine biosynthesis via de novo pathway; L-methionine from L-homocysteine (MetE route): step 1/1. In terms of biological role, catalyzes the transfer of a methyl group from 5-methyltetrahydrofolate to homocysteine resulting in methionine formation. This chain is 5-methyltetrahydropteroyltriglutamate--homocysteine methyltransferase, found in Escherichia coli (strain UTI89 / UPEC).